We begin with the raw amino-acid sequence, 1001 residues long: MAESESLVPDTGAVFTFGKTKFAENIPSKFWFKNDIPICLSCGDEHTAIVTGNNKLYMFGSNNWGQLGLGSKAAIIKPTCIKALKPEKVKLAACGRNHTLVSTDTGGVYAAGGNNEGQLGLGDTDDRDTFHQIVFFTPADTIKQLSAGANTSAALTEDGKLFMWGDNSEGQIGLEDKSNVCIPHEVTVGKPISWISCGYYHSAFVTMDGELYTFGEPENGKLGLPNELLMNHRSPQRVLGIPERVIQVACGGGHTVVLTEKVVYAFGLGQFGQLGLGTFLFETSEPKIIERIKDQKICHISCGENHTALMTELGLLYTFGDGRHGKLGLGMENFTNQFFPTLCSNFLRFAVQLIACGGCHMLVFATPRLGTIDEPKFEDVYEPYISTGSFSINDLSPRSSLNRSLSARLRRRERERPPCSASMVGTLPPLEGTSASTSAYFYPSSPPFHLSVNNYPEKSPSESMEPLDSDYFEDKMNKDTETENSSAVDSENFGETNDILNMTHMMTTSSNEKLLDFSPIQKQQNQDTFEKVMESTPCTENEDSYEYEEMSKIKEVTVYKQYLAKGIYMIRPAEILEAFSDEEVGNGLDQVEEPRVFTDGKGLQSKQVGKESDEEIVSEKKTEVMEVADVKKIRESEENSKSDSLFDDLPDKTMNSESEDNKDIAEERRSSEQNMTFDSETELVEEPDSYMECERHSEQDSAEELEQPKLVEYSSEEKDEKDEKDDDEVETENLWYDRNCTEQETENVFRATRFFPKFDLKHDHLSGIPEEQEGPEDSEGNVVVEQVVQAQKENLEFEGDRKEAKAEAPSDVITEKEAPQLSETVKPEEGEMDEEISILNVEDTVEEERKEGEKEIVEEGSIPETEGSETIDITDEKLDEVLKEEDSASLLQRALREYNENPKGHMYDRVKSSSSEILGGNDPTSKDIKKAKKISFFNRMSLTGQKLMQNTNDPLPEIKPIGDQIALQSDKKDANQNHMGQNLQDSTTPNMEGKSKSCTIL.

RCC1 repeat units lie at residues N54–T105, G106–D158, G159–D208, G209–K261, V262–L313, and G314–P367. Residues S404 to P428 are disordered. S518 is modified (phosphoserine). Basic and acidic residues-rich tracts occupy residues K631 to K641 and E659 to S671. 4 disordered regions span residues K631–R738, N794–E869, P902–S925, and G962–L1001. Composition is skewed to acidic residues over residues S679–M691 and E717–T731. 3 stretches are compositionally biased toward basic and acidic residues: residues N794–A818, E847–V857, and P902–K911. A compositionally biased stretch (polar residues) spans Q976–L1001. C998 is modified (cysteine methyl ester). C998 carries the S-geranylgeranyl cysteine lipid modification. Positions T999–L1001 are cleaved as a propeptide — removed in mature form.

Interacts with SPATA7. Interacts with PDE6D. Interacts with RPGRIP1 and RPGRIP1L; PDE6D, RPGRIP1 and RPGRIP1L may compete for the same binding sites. Interacts with NPM1. Interacts with PDE6D. Isoform 5 interacts (via N-terminus) with SMC1A and SMC3. Isoform 5 interacts with CEP290. Interacts with WHRN. Interacts with RAB37 and RAB8A (in GDP-bound forms); functions as GEF for RAB37 and RAB8A. Prenylated. In terms of tissue distribution, expressed in the retina (at protein level). Located mainly in the connecting cilia between the outer segment and inner segment and also observed in the outer plexiform layer, inner plexiform layer, and ganglion cell layer of the retinas. Isoform 1: Expressed in the retina (at protein level). Isoform 5: Expressed in the retina (at protein level). Expressed in the brain. Expressed in the testis (at protein level). Expressed in kidney (at protein level).

It localises to the golgi apparatus. It is found in the cytoplasm. The protein resides in the cytoskeleton. The protein localises to the microtubule organizing center. Its subcellular location is the centrosome. It localises to the cell projection. It is found in the cilium. The protein resides in the cilium basal body. The protein localises to the cilium axoneme. Its subcellular location is the flagellum axoneme. Functionally, acts as a guanine-nucleotide releasing factor (GEF) for RAB8A and RAB37 by promoting the conversion of inactive RAB-GDP to the active form RAB-GTP. GEF activity towards RAB8A may facilitate ciliary trafficking by modulating ciliary intracellular localization of RAB8A. GEF activity towards RAB37 maintains autophagic homeostasis and retinal function. Involved in photoreceptor integrity. May control cilia formation by regulating actin stress filaments and cell contractility. May be involved in microtubule organization and regulation of transport in primary cilia. Its function is as follows. Isoform 5 may play a critical role in spermatogenesis and in intraflagellar transport processes. This is X-linked retinitis pigmentosa GTPase regulator from Mus musculus (Mouse).